We begin with the raw amino-acid sequence, 303 residues long: GTPase Era (303 aa).

The Era-type G domain occupies 7-174; it reads KSGFVAILGR…IDTLSEKLDE (168 aa). The tract at residues 15-22 is G1; the sequence is GRPNVGKS. 15-22 is a binding site for GTP; it reads GRPNVGKS. A G2 region spans residues 41–45; that stretch reads QTTRN. The interval 62–65 is G3; that stretch reads DTPG. GTP contacts are provided by residues 62 to 66 and 124 to 127; these read DTPGI and NKID. Positions 124 to 127 are G4; the sequence is NKID. The tract at residues 153–155 is G5; sequence ISA. One can recognise a KH type-2 domain in the interval 205–283; it reads TREEVPHSIA…YLETWVKIKN (79 aa).

It belongs to the TRAFAC class TrmE-Era-EngA-EngB-Septin-like GTPase superfamily. Era GTPase family. Monomer.

It localises to the cytoplasm. Its subcellular location is the cell membrane. In terms of biological role, an essential GTPase that binds both GDP and GTP, with rapid nucleotide exchange. Plays a role in 16S rRNA processing and 30S ribosomal subunit biogenesis and possibly also in cell cycle regulation and energy metabolism. The polypeptide is GTPase Era (Lactococcus lactis subsp. lactis (strain IL1403) (Streptococcus lactis)).